The following is a 193-amino-acid chain: Iron-sulfur flavoprotein MJ1083 (193 aa).

Residues Cys-47, Cys-50, Cys-53, and Cys-59 each contribute to the [4Fe-4S] cluster site.

Belongs to the SsuE family. Isf subfamily. Homodimer. It depends on FMN as a cofactor. The cofactor is [4Fe-4S] cluster.

Its function is as follows. Redox-active protein probably involved in electron transport. This is Iron-sulfur flavoprotein MJ1083 from Methanocaldococcus jannaschii (strain ATCC 43067 / DSM 2661 / JAL-1 / JCM 10045 / NBRC 100440) (Methanococcus jannaschii).